Reading from the N-terminus, the 180-residue chain is Flavin prenyltransferase UbiX (180 aa).

FMN is bound by residues 9-11 (GAS), Ser33, 84-87 (SITT), and Arg119. Residues Tyr149 and Arg165 each coordinate dimethylallyl phosphate.

This sequence belongs to the UbiX/PAD1 family.

It catalyses the reaction dimethylallyl phosphate + FMNH2 = prenylated FMNH2 + phosphate. In terms of biological role, flavin prenyltransferase that catalyzes the synthesis of the prenylated FMN cofactor (prenyl-FMN) for 4-hydroxy-3-polyprenylbenzoic acid decarboxylase UbiD. The prenyltransferase is metal-independent and links a dimethylallyl moiety from dimethylallyl monophosphate (DMAP) to the flavin N5 and C6 atoms of FMN. The sequence is that of Flavin prenyltransferase UbiX from Thermoplasma acidophilum (strain ATCC 25905 / DSM 1728 / JCM 9062 / NBRC 15155 / AMRC-C165).